The following is a 410-amino-acid chain: Aspartate aminotransferase (410 aa).

L-aspartate is bound by residues G47, W135, and N185. K249 is modified (N6-(pyridoxal phosphate)lysine). Residue R385 participates in L-aspartate binding.

This sequence belongs to the class-I pyridoxal-phosphate-dependent aminotransferase family. In terms of assembly, homodimer. Pyridoxal 5'-phosphate is required as a cofactor.

The protein resides in the cytoplasm. The enzyme catalyses L-aspartate + 2-oxoglutarate = oxaloacetate + L-glutamate. Functionally, catalyzes the reversible conversion of aspartate and 2-oxoglutarate to glutamate and oxaloacetate. The sequence is that of Aspartate aminotransferase from Rhizobium meliloti (Ensifer meliloti).